We begin with the raw amino-acid sequence, 186 residues long: Ribosome-recycling factor (186 aa).

This sequence belongs to the RRF family.

It is found in the cytoplasm. Its function is as follows. Responsible for the release of ribosomes from messenger RNA at the termination of protein biosynthesis. May increase the efficiency of translation by recycling ribosomes from one round of translation to another. This chain is Ribosome-recycling factor, found in Bacteroides fragilis (strain ATCC 25285 / DSM 2151 / CCUG 4856 / JCM 11019 / LMG 10263 / NCTC 9343 / Onslow / VPI 2553 / EN-2).